A 221-amino-acid polypeptide reads, in one-letter code: Phosphoglycolate phosphatase (221 aa).

Asp7 serves as the catalytic Nucleophile. Mg(2+) is bound by residues Asp7 and Asp9. Lys148 contributes to the substrate binding site. The Mg(2+) site is built by Asp171 and Asp175.

It belongs to the archaeal SPP-like hydrolase family. Requires Mg(2+) as cofactor.

It catalyses the reaction 2-phosphoglycolate + H2O = glycolate + phosphate. Functionally, catalyzes the dephosphorylation of 2-phosphoglycolate. This is Phosphoglycolate phosphatase from Methanothermobacter thermautotrophicus (strain ATCC 29096 / DSM 1053 / JCM 10044 / NBRC 100330 / Delta H) (Methanobacterium thermoautotrophicum).